Consider the following 210-residue polypeptide: MSTIEAEKPRTEVSPRLKLVLELGPLMVFFFANSRGDWLASRFPVLAELGGPIFIATGLFMAATATALIVSWIMTRTLPMMPLISGIVVFVFGALTLWLQNDTFIKMKPTIVNTLFGAILLGGLLFGKSLLGYVFHAAFKLDEDGWRKLTIRWGVFFLFLAVLNEIVWRSFSTDFWVAFKVWGTMPITILFTLAQMPLIMKHSQERESAE.

6 helical membrane-spanning segments follow: residues 19–39 (LVLELGPLMVFFFANSRGDWL), 53–73 (IFIATGLFMAATATALIVSWI), 78–98 (LPMMPLISGIVVFVFGALTLW), 115–135 (LFGAILLGGLLFGKSLLGYVF), 148–168 (KLTIRWGVFFLFLAVLNEIVW), and 175–195 (FWVAFKVWGTMPITILFTLAQ).

The protein belongs to the YciB family.

Its subcellular location is the cell inner membrane. In terms of biological role, plays a role in cell envelope biogenesis, maintenance of cell envelope integrity and membrane homeostasis. This is Inner membrane-spanning protein YciB from Sinorhizobium fredii (strain NBRC 101917 / NGR234).